A 98-amino-acid chain; its full sequence is Large ribosomal subunit protein bL21 (98 aa).

The protein belongs to the bacterial ribosomal protein bL21 family. As to quaternary structure, part of the 50S ribosomal subunit. Contacts protein L20.

In terms of biological role, this protein binds to 23S rRNA in the presence of protein L20. This Novosphingobium aromaticivorans (strain ATCC 700278 / DSM 12444 / CCUG 56034 / CIP 105152 / NBRC 16084 / F199) protein is Large ribosomal subunit protein bL21.